Consider the following 291-residue polypeptide: 4-hydroxy-tetrahydrodipicolinate synthase (291 aa).

Pyruvate is bound at residue Thr-45. The active-site Proton donor/acceptor is Tyr-133. Lys-161 serves as the catalytic Schiff-base intermediate with substrate. Ile-203 lines the pyruvate pocket.

This sequence belongs to the DapA family. In terms of assembly, homotetramer; dimer of dimers.

It localises to the cytoplasm. The enzyme catalyses L-aspartate 4-semialdehyde + pyruvate = (2S,4S)-4-hydroxy-2,3,4,5-tetrahydrodipicolinate + H2O + H(+). Its pathway is amino-acid biosynthesis; L-lysine biosynthesis via DAP pathway; (S)-tetrahydrodipicolinate from L-aspartate: step 3/4. In terms of biological role, catalyzes the condensation of (S)-aspartate-beta-semialdehyde [(S)-ASA] and pyruvate to 4-hydroxy-tetrahydrodipicolinate (HTPA). The protein is 4-hydroxy-tetrahydrodipicolinate synthase of Acidithiobacillus ferrooxidans (strain ATCC 23270 / DSM 14882 / CIP 104768 / NCIMB 8455) (Ferrobacillus ferrooxidans (strain ATCC 23270)).